A 323-amino-acid polypeptide reads, in one-letter code: rRNA 2'-O-methyltransferase fibrillarin (323 aa).

The interval 1–80 (MGFERGGRGG…AKGGAAGKKV (80 aa)) is disordered. R5, R8, R12, R16, R23, R26, R30, R34, R41, R47, R49, R53, R57, R62, R64, and R68 each carry asymmetric dimethylarginine. Residues 8-76 (RGGARGGGRG…ARGGAKGGAA (69 aa)) show a composition bias toward gly residues. Residues 174-175 (TS), 193-194 (EF), 218-219 (DA), and 238-241 (DVAQ) each bind S-adenosyl-L-methionine.

Belongs to the methyltransferase superfamily. Fibrillarin family. In terms of assembly, component of box C/D small nucleolar ribonucleoprotein (snoRNP) particles. In terms of processing, by homology to other fibrillarins, some or all of the N-terminal domain arginines are modified to asymmetric dimethylarginine (DMA).

The protein localises to the nucleus. The protein resides in the nucleolus. The enzyme catalyses L-glutaminyl-[histone H2A] + S-adenosyl-L-methionine = N(5)-methyl-L-glutaminyl-[histone H2A] + S-adenosyl-L-homocysteine + H(+). In terms of biological role, S-adenosyl-L-methionine-dependent methyltransferase that has the ability to methylate both RNAs and proteins. Involved in pre-rRNA processing. Utilizes the methyl donor S-adenosyl-L-methionine to catalyze the site-specific 2'-hydroxyl methylation of ribose moieties in pre-ribosomal RNA. Site specificity is provided by a guide RNA that base pairs with the substrate. Methylation occurs at a characteristic distance from the sequence involved in base pairing with the guide RNA. Also acts as a protein methyltransferase by mediating methylation of 'Gln-105' of histone H2A (H2AQ105me), a modification that impairs binding of the FACT complex and is specifically present at 35S ribosomal DNA locus. In Neurospora crassa (strain ATCC 24698 / 74-OR23-1A / CBS 708.71 / DSM 1257 / FGSC 987), this protein is rRNA 2'-O-methyltransferase fibrillarin (nop-1).